Reading from the N-terminus, the 339-residue chain is NADH-quinone oxidoreductase subunit H (339 aa).

Transmembrane regions (helical) follow at residues I9–C29, P50–F70, I82–I102, V115–G135, M161–I181, M187–L207, M235–T255, I275–I295, and G311–V331.

This sequence belongs to the complex I subunit 1 family. NDH-1 is composed of 14 different subunits. Subunits NuoA, H, J, K, L, M, N constitute the membrane sector of the complex.

It is found in the cell inner membrane. The catalysed reaction is a quinone + NADH + 5 H(+)(in) = a quinol + NAD(+) + 4 H(+)(out). Its function is as follows. NDH-1 shuttles electrons from NADH, via FMN and iron-sulfur (Fe-S) centers, to quinones in the respiratory chain. The immediate electron acceptor for the enzyme in this species is believed to be ubiquinone. Couples the redox reaction to proton translocation (for every two electrons transferred, four hydrogen ions are translocated across the cytoplasmic membrane), and thus conserves the redox energy in a proton gradient. This subunit may bind ubiquinone. The polypeptide is NADH-quinone oxidoreductase subunit H (Rickettsia conorii (strain ATCC VR-613 / Malish 7)).